We begin with the raw amino-acid sequence, 396 residues long: L-lactate dehydrogenase (396 aa).

The 380-residue stretch at 1–380 folds into the FMN hydroxy acid dehydrogenase domain; that stretch reads MIISAASDYR…TQDSLVQGLG (380 aa). Position 24 (tyrosine 24) interacts with substrate. Residues serine 106 and glutamine 127 each coordinate FMN. Tyrosine 129 is a binding site for substrate. Threonine 155 contributes to the FMN binding site. Arginine 164 lines the substrate pocket. Residue lysine 251 participates in FMN binding. The Proton acceptor role is filled by histidine 275. Substrate is bound at residue arginine 278. Residue 306 to 330 participates in FMN binding; that stretch reads DSGIRNGLDVVRMIALGADTVLLGR.

The protein belongs to the FMN-dependent alpha-hydroxy acid dehydrogenase family. FMN is required as a cofactor.

The protein localises to the cell inner membrane. The catalysed reaction is (S)-lactate + A = pyruvate + AH2. In terms of biological role, catalyzes the conversion of L-lactate to pyruvate. Is coupled to the respiratory chain. The chain is L-lactate dehydrogenase from Escherichia coli O127:H6 (strain E2348/69 / EPEC).